The sequence spans 54 residues: uncharacterized protein (54 aa).

The tract at residues Met-1–Lys-54 is disordered. The segment covering Ser-28–Lys-54 has biased composition (low complexity).

This is an uncharacterized protein from Dictyostelium discoideum (Social amoeba).